Reading from the N-terminus, the 777-residue chain is MNTKLTKIISGLFVATAAFQTASAGNITDIKVSSLPNKQKIVKVSFDKEIVNPTGFVTSSPARIALDFEQTGISMDQQVLEYADPLLSKISAAQNSSRARLVLNLNKPGQYNTEVRGNKVWIFINESDDTVSAPARPAVKAAPAAPAKQQAAAPSTKSAVSVSEPFTPAKQQAAAPFTESVVSVSAPFSPAKQQAAASAKQQAAAPAKQQAAAPAKQQAAAPAKQQAAAPAKQTNIDFRKDGKNAGIIELAALGFAGQPDISQQHDHIIVTLKNHTLPTTLQRSLDVADFKTPVQKVTLKRLNNDTQLIITTAGNWELVNKSAAPGYFTFQVLPKKQNLESGGVNNAPKTFTGRKISLDFQDVEIRTILQILAKESGMNIVASDSVNGKMTLSLKDVPWDQALDLVMQARNLDMRQQGNIVNIAPRDELLAKDKALLQAEKDIADLGALYSQNFQLKYKNVEEFRSILRLDNADTTGNRNTLISGRGSVLIDPATNTLIVTDTRSVIEKFRKLIDELDVPAQQVMIEARIVEAADGFSRDLGVKFGATGKKKLKNDTSAFGWGVNSGFGGDDKWGAETKINLPITAAANSISLVRAISSGALNLELSASESLSKTKTLANPRVLTQNRKEAKIESGYEIPFTVTSIANGGSSTNTELKKAVLGLTVTPNITPDGQIIMTVKINKDSPAQCASGNQTILCISTKNLNTQAMVENGGTLIVGGIYEEDNGNTLTKVPLLGDIPVIGNLFKTRGKKTDRRELLIFITPRIMGTAGNSLRY.

The N-terminal stretch at 1–24 (MNTKLTKIISGLFVATAAFQTASA) is a signal peptide. Composition is skewed to low complexity over residues 135–154 (ARPAVKAAPAAPAKQQAAAP) and 197–233 (ASAKQQAAAPAKQQAAAPAKQQAAAPAKQQAAAPAKQ). Disordered regions lie at residues 135 to 156 (ARPAVKAAPAAPAKQQAAAPST) and 197 to 236 (ASAKQQAAAPAKQQAAAPAKQQAAAPAKQQAAAPAKQTNI).

The protein belongs to the bacterial secretin family. PilQ subfamily. Homododecamer. Tetramer of trimer.

The protein localises to the cell outer membrane. Required for type IV pilus biogenesis and competence. Could function as a pore for exit of the pilus but also as a channel for entry of heme and antimicrobial agents and uptake of transforming DNA. The polypeptide is Type IV pilus biogenesis and competence protein PilQ (pilQ) (Neisseria meningitidis serogroup B / serotype 15 (strain H44/76)).